Here is a 278-residue protein sequence, read N- to C-terminus: 4-hydroxy-3-methylbut-2-enyl diphosphate reductase (278 aa).

C12 is a binding site for [4Fe-4S] cluster. Residues H40 and H75 each contribute to the (2E)-4-hydroxy-3-methylbut-2-enyl diphosphate site. H40 and H75 together coordinate dimethylallyl diphosphate. Isopentenyl diphosphate contacts are provided by H40 and H75. C97 serves as a coordination point for [4Fe-4S] cluster. H125 contributes to the (2E)-4-hydroxy-3-methylbut-2-enyl diphosphate binding site. Dimethylallyl diphosphate is bound at residue H125. H125 contacts isopentenyl diphosphate. E127 acts as the Proton donor in catalysis. T157 is a binding site for (2E)-4-hydroxy-3-methylbut-2-enyl diphosphate. Residue C187 coordinates [4Fe-4S] cluster. (2E)-4-hydroxy-3-methylbut-2-enyl diphosphate contacts are provided by S215, S216, N217, and S258. Dimethylallyl diphosphate-binding residues include S215, S216, N217, and S258. The isopentenyl diphosphate site is built by S215, S216, N217, and S258.

Belongs to the IspH family. It depends on [4Fe-4S] cluster as a cofactor.

The enzyme catalyses isopentenyl diphosphate + 2 oxidized [2Fe-2S]-[ferredoxin] + H2O = (2E)-4-hydroxy-3-methylbut-2-enyl diphosphate + 2 reduced [2Fe-2S]-[ferredoxin] + 2 H(+). The catalysed reaction is dimethylallyl diphosphate + 2 oxidized [2Fe-2S]-[ferredoxin] + H2O = (2E)-4-hydroxy-3-methylbut-2-enyl diphosphate + 2 reduced [2Fe-2S]-[ferredoxin] + 2 H(+). Its pathway is isoprenoid biosynthesis; dimethylallyl diphosphate biosynthesis; dimethylallyl diphosphate from (2E)-4-hydroxy-3-methylbutenyl diphosphate: step 1/1. It functions in the pathway isoprenoid biosynthesis; isopentenyl diphosphate biosynthesis via DXP pathway; isopentenyl diphosphate from 1-deoxy-D-xylulose 5-phosphate: step 6/6. Functionally, catalyzes the conversion of 1-hydroxy-2-methyl-2-(E)-butenyl 4-diphosphate (HMBPP) into a mixture of isopentenyl diphosphate (IPP) and dimethylallyl diphosphate (DMAPP). Acts in the terminal step of the DOXP/MEP pathway for isoprenoid precursor biosynthesis. This chain is 4-hydroxy-3-methylbut-2-enyl diphosphate reductase, found in Pseudothermotoga lettingae (strain ATCC BAA-301 / DSM 14385 / NBRC 107922 / TMO) (Thermotoga lettingae).